A 146-amino-acid chain; its full sequence is Transcriptional regulator MraZ (146 aa).

2 SpoVT-AbrB domains span residues 4–46 (SYEK…SKKS) and 75–118 (TIEV…SKEK).

It belongs to the MraZ family. In terms of assembly, forms oligomers.

It localises to the cytoplasm. The protein resides in the nucleoid. In Mycoplasma mobile (strain ATCC 43663 / 163K / NCTC 11711) (Mesomycoplasma mobile), this protein is Transcriptional regulator MraZ.